Consider the following 175-residue polypeptide: Transcription factor E (175 aa).

The HTH TFE/IIEalpha-type domain occupies 3–88 (ENPLIQQVLF…TWKPSLEKVP (86 aa)).

This sequence belongs to the TFE family. As to quaternary structure, monomer. Interaction with RNA polymerase subunits RpoF and RpoE is necessary for Tfe stimulatory transcription activity. Able to interact with Tbp and RNA polymerase in the absence of DNA promoter. Interacts both with the preinitiation and elongation complexes.

Its function is as follows. Transcription factor that plays a role in the activation of archaeal genes transcribed by RNA polymerase. Facilitates transcription initiation by enhancing TATA-box recognition by TATA-box-binding protein (Tbp), and transcription factor B (Tfb) and RNA polymerase recruitment. Not absolutely required for transcription in vitro, but particularly important in cases where Tbp or Tfb function is not optimal. It dynamically alters the nucleic acid-binding properties of RNA polymerases by stabilizing the initiation complex and destabilizing elongation complexes. Seems to translocate with the RNA polymerase following initiation and acts by binding to the non template strand of the transcription bubble in elongation complexes. In Methanococcus maripaludis (strain DSM 14266 / JCM 13030 / NBRC 101832 / S2 / LL), this protein is Transcription factor E.